Consider the following 226-residue polypeptide: MEVGSATKKLQCQRIGCNAMFTDDDNPQGSCQFHASGPFFHDGMKEWSCCKQRSHDFSLFLEIPGCKTGKHTTEKPVLAKSVPKHPVAAPTSSPDANAATKDSCSRCRQGFFCSDHGSQPKEQIKQTLNTPGQAEEEKIEPLAPPVQKAVIDINQPQVCKNKGCGQTFKERDNHETACSHHPGPAVFHDRLRGWKCCDVHVKEFDEFMEIPPCTKGWHSSSPDPAV.

Zn(2+) is bound by residues C12, C17, C31, H34, C49, C50, C66, and H71. In terms of domain architecture, CHORD 1 spans 12 to 71; it reads CQRIGCNAMFTDDDNPQGSCQFHASGPFFHDGMKEWSCCKQRSHDFSLFLEIPGCKTGKH. The short motif at 104-124 is the CCCH element; that stretch reads CSRCRQGFFCSDHGSQPKEQI. C159, C164, C178, H181, C196, C197, C213, and H218 together coordinate Zn(2+). The CHORD 2 domain occupies 159–218; it reads CKNKGCGQTFKERDNHETACSHHPGPAVFHDRLRGWKCCDVHVKEFDEFMEIPPCTKGWH.

Interacts with HSP90-1, HSP90-2, SGT1A and SGT1B. Forms a ternary complex with SGT1A and barley HSP90.

In terms of biological role, required specifically for plant innate immunity. Is essential for resistance conferred by multiple R genes recognizing different bacterial and oomycete pathogen isolates like avirulent P.syringae or H.parasitica (downy mildew). Contributes additively with SGT1B to RPP5-dependent resistance. Functions as a positive regulator of RPS5 accumulation by assisting its stabilization. May function as co-chaperone of HSP90-2 to positively regulate the steady-state accumulation of RPM1 and protect it from SGT1-mediated degradation. Acts as a negative regulator of pathogen-associated molecular pattern (PAMP)-triggered immunity. This Arabidopsis thaliana (Mouse-ear cress) protein is Cysteine and histidine-rich domain-containing protein RAR1 (RAR1).